Reading from the N-terminus, the 251-residue chain is MSDHVYNLVKKHHSVRKFKNKPLSEDVVKKLVEAGQSASTSSFLQAYSIIGIDDEQIKENLREVSGQPYVVENGYLFVFVIDYYRHHLVDQHAETDMENAYGSTEGLLVGAIDAALVAENIAVTAEDMGYGIVFLGSLRNDVARVREILDLPDYVFPLFGMAVGEPAEDENGAAKPRLPFDHVFHHNKYHADKETQYAQMADYDQTISKYYDQRTNGNRKETWSQQIEMFLGNKARLDMLEQLQKSGLIQR.

Belongs to the flavin oxidoreductase frp family. FMN is required as a cofactor.

Reduces FMN, organic nitro compounds and disulfide DTNB. Involved in maintenance of the cellular redox state and the disulfide stress response. This is NADPH-dependent oxidoreductase (nfrA) from Staphylococcus aureus (strain MRSA252).